Consider the following 104-residue polypeptide: Histone H4 (104 aa).

The disordered stretch occupies residues 1–21; that stretch reads MAGRGKVGKGYGKVGAKRHTK.

It belongs to the histone H4 family. The nucleosome is a histone octamer containing two molecules each of H2A, H2B, H3 and H4 assembled in one H3-H4 heterotetramer and two H2A-H2B heterodimers. The octamer wraps approximately 147 bp of DNA.

The protein resides in the nucleus. The protein localises to the chromosome. Functionally, core component of nucleosome. Nucleosomes wrap and compact DNA into chromatin, limiting DNA accessibility to the cellular machineries which require DNA as a template. Histones thereby play a central role in transcription regulation, DNA repair, DNA replication and chromosomal stability. DNA accessibility is regulated via a complex set of post-translational modifications of histones, also called histone code, and nucleosome remodeling. In Sterkiella nova (Ciliate), this protein is Histone H4.